The sequence spans 129 residues: Protein NrdI (129 aa).

This sequence belongs to the NrdI family.

Functionally, probably involved in ribonucleotide reductase function. The protein is Protein NrdI of Macrococcus caseolyticus (strain JCSC5402) (Macrococcoides caseolyticum).